We begin with the raw amino-acid sequence, 476 residues long: Proline--tRNA ligase 2 (476 aa).

This sequence belongs to the class-II aminoacyl-tRNA synthetase family. ProS type 3 subfamily. In terms of assembly, homodimer.

It is found in the cytoplasm. The catalysed reaction is tRNA(Pro) + L-proline + ATP = L-prolyl-tRNA(Pro) + AMP + diphosphate. Its function is as follows. Catalyzes the attachment of proline to tRNA(Pro) in a two-step reaction: proline is first activated by ATP to form Pro-AMP and then transferred to the acceptor end of tRNA(Pro). In Bacillus thuringiensis subsp. konkukian (strain 97-27), this protein is Proline--tRNA ligase 2.